Here is a 731-residue protein sequence, read N- to C-terminus: Alpha-1,4-glucan:maltose-1-phosphate maltosyltransferase (731 aa).

Positions 1 to 10 (MEAQHNETEA) are enriched in basic and acidic residues. Positions 1 to 31 (MEAQHNETEAAGKPAAKKTTRTRKPRASKQA) are disordered. Basic residues predominate over residues 15–27 (AAKKTTRTRKPRA). Residues Lys-321, Gln-381, and Asp-416 each coordinate alpha-maltose 1-phosphate. Asp-451 acts as the Nucleophile in catalysis. Asn-452 contacts alpha-maltose 1-phosphate. Glu-480 functions as the Proton donor in the catalytic mechanism. 590-591 (KF) contributes to the alpha-maltose 1-phosphate binding site.

Belongs to the glycosyl hydrolase 13 family. GlgE subfamily. In terms of assembly, homodimer.

The enzyme catalyses alpha-maltose 1-phosphate + [(1-&gt;4)-alpha-D-glucosyl](n) = [(1-&gt;4)-alpha-D-glucosyl](n+2) + phosphate. Functionally, maltosyltransferase that uses maltose 1-phosphate (M1P) as the sugar donor to elongate linear or branched alpha-(1-&gt;4)-glucans. Is involved in a branched alpha-glucan biosynthetic pathway from trehalose, together with TreS, Mak and GlgB. The protein is Alpha-1,4-glucan:maltose-1-phosphate maltosyltransferase of Bifidobacterium animalis subsp. lactis (strain Bl-04 / DGCC2908 / RB 4825 / SD5219).